The following is a 376-amino-acid chain: Drebrin-like protein B (376 aa).

An ADF-H domain is found at 2–133 (SVNLSKNGAA…EPESIMEKVA (132 aa)). Residues 175–231 (KENFWAKAEKDEEERRIEEHRRANVEKDRLERERKEREQREAEERERRFRERSKEID) adopt a coiled-coil conformation. A compositionally biased stretch (basic and acidic residues) spans 202 to 242 (DRLERERKEREQREAEERERRFRERSKEIDGHRKQQEEVEK). The segment at 202 to 288 (DRLERERKER…FTASQQEEEN (87 aa)) is disordered. Residues 268-283 (ESGSVSAQPEQFTASQ) show a composition bias toward polar residues. Residues 317–376 (DSGMCARALYDYQAADDTEISFDPDDVIIQIEMIDDGWWRGVAPSGHFGMFPANYVELLE) form the SH3 domain.

Belongs to the ABP1 family.

It is found in the cytoplasm. The protein localises to the cytoskeleton. The protein resides in the cell projection. It localises to the lamellipodium. Its subcellular location is the ruffle. It is found in the cell cortex. The protein localises to the cytosol. The protein resides in the synapse. It localises to the perikaryon. Its subcellular location is the neuron projection. It is found in the cell membrane. The protein localises to the cytoplasmic vesicle. The protein resides in the clathrin-coated vesicle membrane. It localises to the golgi apparatus membrane. Its subcellular location is the podosome. It is found in the early endosome. The protein localises to the dendrite. The protein resides in the postsynaptic density. Adapter protein that binds F-actin and dynamin, and thereby plays a role in receptor-mediated endocytosis. Plays a role in the reorganization of the actin cytoskeleton, formation of cell projections, such as neurites, in neuron morphogenesis and synapse formation. Does not bind G-actin and promote actin polymerization by itself, but excerts its functions by interaction with other proteins. Required for the formation of organized podosome rosettes. The protein is Drebrin-like protein B (dbnl-b) of Xenopus laevis (African clawed frog).